The primary structure comprises 29 residues: Cytochrome b6-f complex subunit 8 (29 aa).

A helical membrane pass occupies residues 3–23; sequence MVSLAWAALMVVFTFSLSLVV.

It belongs to the PetN family. The 4 large subunits of the cytochrome b6-f complex are cytochrome b6, subunit IV (17 kDa polypeptide, PetD), cytochrome f and the Rieske protein, while the 4 small subunits are PetG, PetL, PetM and PetN. The complex functions as a dimer.

It is found in the plastid. Its subcellular location is the chloroplast thylakoid membrane. Component of the cytochrome b6-f complex, which mediates electron transfer between photosystem II (PSII) and photosystem I (PSI), cyclic electron flow around PSI, and state transitions. The sequence is that of Cytochrome b6-f complex subunit 8 from Cucumis sativus (Cucumber).